The following is a 501-amino-acid chain: Serine/threonine protein phosphatase 2A 55 kDa regulatory subunit B beta isoform (501 aa).

M1 is subject to N-acetylmethionine. WD repeat units follow at residues 34–73 (QEVDIISAIEFDKSGDHLATGDRGGRVVLFERTDTKDHGG), 110–151 (EIEE…IKKI), 220–258 (AHDYHINSISNSSDGETFISADDLRVNLWNLEISNQSFN), 269–309 (DLTE…LCDS), and 328–366 (EIIASISDIKFSKDGRYILSRDYMTLKLWDINMDSGPVA). Positions 439 to 449 (TPARPSRSIGS) are enriched in polar residues. Residues 439 to 466 (TPARPSRSIGSMTRVVRRGSESPGTEAN) form a disordered region. A WD 6 repeat occupies 471-501 (DFTTKLLHMAWHPTENSIACAAANSLYMYYA).

It belongs to the phosphatase 2A regulatory subunit B family. PP2A consists of a common heteromeric enzyme, composed of a catalytic subunit (subunits C), a constant regulatory subunit (subunit A), and a variety of regulatory subunits such as subunits B (the R2/B/PR55/B55, R3/B''/PR72/PR130/PR59 and R5/B'/B56 families). Interacts with SIC/RON3. As to expression, expressed ubiquitously.

Its function is as follows. The B regulatory subunit may modulate substrate selectivity and catalytic activity, and may also direct the localization of the catalytic enzyme to a particular subcellular compartment. The protein is Serine/threonine protein phosphatase 2A 55 kDa regulatory subunit B beta isoform (PP2AB2) of Arabidopsis thaliana (Mouse-ear cress).